A 170-amino-acid chain; its full sequence is UPF0260 protein RPC_1790 (170 aa).

It belongs to the UPF0260 family.

The protein is UPF0260 protein RPC_1790 of Rhodopseudomonas palustris (strain BisB18).